The primary structure comprises 281 residues: Elongation factor 1-delta (281 aa).

The residue at position 2 (alanine 2) is an N-acetylalanine. Position 17 is an N6-acetyllysine (lysine 17). Phosphoserine occurs at positions 37, 44, 60, 86, and 106. The leucine-zipper stretch occupies residues 80–115 (LVVRIASLEVENQSLRGVVQELQQAISKLEARLNVL). The residue at position 107 (lysine 107) is an N6-acetyllysine. Position 117 is an N6-acetyllysine; alternate (lysine 117). At lysine 117 the chain carries N6-succinyllysine; alternate. Residues 118 to 172 (SSPGHRATAPQTQHVSPMRQVEPPAKKPATPAEDDEDDDIDLFGSDNEEEDKEAA) are disordered. The residue at position 119 (serine 119) is a Phosphoserine. Threonine 129 is subject to Phosphothreonine. Serine 133 is subject to Phosphoserine. Threonine 147 bears the Phosphothreonine mark. Positions 149–169 (AEDDEDDDIDLFGSDNEEEDK) are enriched in acidic residues. Position 162 is a phosphoserine; by CK2 (serine 162). The catalytic (GEF) stretch occupies residues 173 to 281 (QLREERLRQY…SVDIAAFNKI (109 aa)).

It belongs to the EF-1-beta/EF-1-delta family. As to quaternary structure, EF-1 is composed of 4 subunits: alpha, beta, delta isoform 1, and gamma. Isoform 2 interacts with HSF1 and NFE2L2.

Its subcellular location is the nucleus. In terms of biological role, EF-1-beta and EF-1-delta stimulate the exchange of GDP bound to EF-1-alpha to GTP, regenerating EF-1-alpha for another round of transfer of aminoacyl-tRNAs to the ribosome. Its function is as follows. Regulates induction of heat-shock-responsive genes through association with heat shock transcription factors and direct DNA-binding at heat shock promoter elements (HSE). The chain is Elongation factor 1-delta (EEF1D) from Macaca fascicularis (Crab-eating macaque).